Consider the following 136-residue polypeptide: Non-structural protein 1 (136 aa).

This sequence belongs to the pneumovirus non-structural protein 1 family. In terms of assembly, monomer. Homomultimer. Heteromultimer with NS2. Interacts with the matrix protein M. Interacts with host ELOC and CUL2; this interaction allows NS1 to form an active E3 ligase with ELOC and CUL2. Interacts with host IRF3; this interaction leads to the disrupted association of IRF3 with CREBBP and thus reduced binding of IRF3 to the IFN-beta promoter. Interacts with host MAVS; this interaction prevents MAVS binding to RIGI and inhibits signaling pathway leading to interferon production. Interacts with host TRIM25 (via SPRY domain); this interaction suppresses RIGI ubiquitination and results in decreased interaction between RIGI and MAVS.

Its subcellular location is the host cytoplasm. The protein localises to the host mitochondrion. The protein resides in the host nucleus. In terms of biological role, plays a major role in antagonizing the type I IFN-mediated antiviral response by degrading or inhibiting multiple cellular factors required for either IFN induction or response pathways. Acts cooperatively with NS2 to repress activation and nuclear translocation of host IFN-regulatory factor IRF3. Also disrupts the association of IRF3 with CREBBP. Interacts with host mitochondrial-associated membrane (MAM) MAVS and prevents the interaction with RIGI. Interacts with TRIM25 to suppress TRIM25-mediated RIGI ubiquitination and thereby RIGI-MAVS interaction. Together with NS2, participates in the proteasomal degradation of host STAT2, IRF3, IRF7, TBK1 and RIGI through a NS-degradasome involving CUL2 and Elongin-C. The degradasome requires an intact mitochondrial MAVS. Decreases the levels of host TRAF3 and IKBKE/IKK-epsilon. As functions other than disruptions of the type I IFN-mediated antiviral signaling pathways, induces host SOCS1 and SOCS3 expression. Suppresses premature apoptosis by an NF-kappa-B-dependent, interferon-independent mechanism and thus facilitates virus growth. Additionally, NS1 may serve some inhibitory role in viral transcription and RNA replication. Suppresses proliferation and activation of host CD103+ CD8+ cytotoxic T-lymphocytes and Th17 helper T-lymphocytes. The sequence is that of Non-structural protein 1 (1C) from Bos taurus (Bovine).